Reading from the N-terminus, the 209-residue chain is Large ribosomal subunit protein uL3 (209 aa).

An N5-methylglutamine modification is found at Gln-150.

It belongs to the universal ribosomal protein uL3 family. Part of the 50S ribosomal subunit. Forms a cluster with proteins L14 and L19. Post-translationally, methylated by PrmB.

Functionally, one of the primary rRNA binding proteins, it binds directly near the 3'-end of the 23S rRNA, where it nucleates assembly of the 50S subunit. This Buchnera aphidicola subsp. Schizaphis graminum (strain Sg) protein is Large ribosomal subunit protein uL3.